Reading from the N-terminus, the 596-residue chain is Aspartic proteinase MKC7 (596 aa).

A signal peptide spans 1–22; that stretch reads MKLSVLTFVVDALLVCSSIVDA. A propeptide spanning residues 23-65 is cleaved from the precursor; the sequence is GVTDFPSLPSNEVYVKMNFQKKYGSSFENALDDTKGRTRLMTR. Residues 81 to 468 enclose the Peptidase A1 domain; that stretch reads YSVELDIGTP…DLDNMEISMA (388 aa). D99 is an active-site residue. N180, N190, N219, N229, N232, N286, and N346 each carry an N-linked (GlcNAc...) asparagine glycan. D360 is an active-site residue. N-linked (GlcNAc...) asparagine glycosylation is found at N471 and N517. Residues 530 to 570 show a composition bias toward low complexity; the sequence is ATSSSSSKGQKTQTSTTALSISKSTSSTSSTGMLSPTSSSS. The segment at 530 to 578 is disordered; it reads ATSSSSSKGQKTQTSTTALSISKSTSSTSSTGMLSPTSSSSTRKENGGH. N575 carries the GPI-anchor amidated asparagine lipid modification. The propeptide at 576 to 596 is removed in mature form; it reads GGHNLNPPFFARFITAIFHHI.

Belongs to the peptidase A1 family.

It localises to the cell membrane. It catalyses the reaction Hydrolyzes various precursor proteins with Arg or Lys in P1, and commonly Arg or Lys also in P2. The P3 amino acid is usually non-polar, but otherwise additional basic amino acids are favorable in both non-prime and prime positions.. Cleaves proteins C-terminally to the most C-terminal basic residue. Can process the alpha-mating factor precursor. Required for cell wall integrity. This Saccharomyces cerevisiae (strain ATCC 204508 / S288c) (Baker's yeast) protein is Aspartic proteinase MKC7 (MKC7).